Consider the following 127-residue polypeptide: Protein ApaG (127 aa).

One can recognise an ApaG domain in the interval 2 to 127 (SELVEHIQVH…FRLAGPNQVH (126 aa)).

In Chromohalobacter salexigens (strain ATCC BAA-138 / DSM 3043 / CIP 106854 / NCIMB 13768 / 1H11), this protein is Protein ApaG.